The primary structure comprises 439 residues: Serine/threonine-protein kinase 2 (439 aa).

One can recognise a Protein kinase domain in the interval 87–439 (NDDFYHISTG…IFSDWINGGN (353 aa)). ATP contacts are provided by residues 93-101 (ISTGGYGIV) and Lys-117. The active-site Proton acceptor is the Asp-307.

The protein belongs to the protein kinase superfamily. Ser/Thr protein kinase family. Phosphorylated in vivo. Autophosphorylated in vitro.

Its subcellular location is the host endoplasmic reticulum. The protein resides in the host endoplasmic reticulum-Golgi intermediate compartment. It carries out the reaction L-seryl-[protein] + ATP = O-phospho-L-seryl-[protein] + ADP + H(+). The catalysed reaction is L-threonyl-[protein] + ATP = O-phospho-L-threonyl-[protein] + ADP + H(+). Functionally, essential serine-protein kinase involved in the early stage of virion morphogenesis. In Bos taurus (Bovine), this protein is Serine/threonine-protein kinase 2 (OPG054).